The sequence spans 616 residues: Cleavage stimulation factor subunit 2 tau variant (616 aa).

The 79-residue stretch at 16-94 (RSVFVGNIPY…RALRVDNAAS (79 aa)) folds into the RRM domain. Disordered regions lie at residues 203 to 241 (GKSQ…QPQH) and 262 to 418 (IPAP…SRAM). 2 stretches are compositionally biased toward low complexity: residues 223 to 233 (PGPNVLLNQQN) and 319 to 331 (VTPG…GLLG). T320 is modified (phosphothreonine). Positions 368–381 (SGHDTRGPSSHEMR) are enriched in basic and acidic residues. One copy of the 1-1 repeat lies at 418-422 (METRA). The segment at 418 to 462 (METRAMETEVLETRVMERRGMETCAMETRGMEARGMDARGLEMRG) is 9 X 5 AA tandem repeats of M-E-T-R-[AG]. A 1-2; approximate repeat occupies 423–427 (METEV). The 1-3; approximate repeat unit spans residues 428–432 (LETRV). The stretch at 433–437 (MERRG) is one 1-4; approximate repeat. One copy of the 1-5; approximate repeat lies at 438-442 (METCA). The 1-6 repeat unit spans residues 443–447 (METRG). The 1-7; approximate repeat unit spans residues 448–452 (MEARG). One copy of the 1-8; approximate repeat lies at 453–457 (MDARG). One copy of the 1-9; approximate repeat lies at 458–462 (LEMRG). Tandem repeats lie at residues 505–509 (GAGMQ), 510–514 (GTGIQ), 515–519 (GTGMQ), and 520–524 (GAGIQ). Residues 505 to 549 (GAGMQGTGIQGTGMQGAGIQGGGMQGAGIQGVSIQGGGIQGGGIQ) are 9 X 5 AA tandem repeats of G-[AT]-G-[MI]-Q. The stretch at 525–529 (GGGMQ) is one 2-5; approximate repeat. One copy of the 2-6 repeat lies at 530-534 (GAGIQ). Residues 535–539 (GVSIQ) form a 2-7; approximate repeat. One copy of the 2-8; approximate repeat lies at 540 to 544 (GGGIQ). The segment at 542–573 (GIQGGGIQGASKQGGSQPSSFSPGQSQVTPQD) is disordered. Residues 545–549 (GGGIQ) form a 2-9; approximate repeat. A compositionally biased stretch (low complexity) spans 550–568 (GASKQGGSQPSSFSPGQSQ). S563 is subject to Phosphoserine.

The protein localises to the nucleus. May play a significant role in AAUAAA-independent mRNA polyadenylation in germ cells. Directly involved in the binding to pre-mRNAs. The polypeptide is Cleavage stimulation factor subunit 2 tau variant (CSTF2T) (Homo sapiens (Human)).